Consider the following 500-residue polypeptide: Replication factor C large subunit (500 aa).

Position 44-51 (44-51 (GSPGVGKT)) interacts with ATP. The segment at 443–500 (HAADDLGASDGETTNASGTASSSGDDGDADGTTDGDGSDANDGNDDDDDGQAGLSDFV) is disordered. Residues 455 to 466 (TTNASGTASSSG) are compositionally biased toward low complexity. A compositionally biased stretch (acidic residues) spans 467-492 (DDGDADGTTDGDGSDANDGNDDDDDG).

This sequence belongs to the activator 1 small subunits family. RfcL subfamily. In terms of assembly, heteromultimer composed of small subunits (RfcS) and large subunits (RfcL).

Part of the RFC clamp loader complex which loads the PCNA sliding clamp onto DNA. This is Replication factor C large subunit from Halorubrum lacusprofundi (strain ATCC 49239 / DSM 5036 / JCM 8891 / ACAM 34).